The primary structure comprises 243 residues: Small ribosomal subunit protein uS3 (243 aa).

Positions 39-107 constitute a KH type-2 domain; sequence MRKFVMSELK…ETHLNIVEVR (69 aa). The interval 214–243 is disordered; that stretch reads ASERRAMEGDAQGPASRDRDRDRDRRRDNA. Residues 229-243 are compositionally biased toward basic and acidic residues; that stretch reads SRDRDRDRDRRRDNA.

The protein belongs to the universal ribosomal protein uS3 family. As to quaternary structure, part of the 30S ribosomal subunit. Forms a tight complex with proteins S10 and S14.

Functionally, binds the lower part of the 30S subunit head. Binds mRNA in the 70S ribosome, positioning it for translation. The sequence is that of Small ribosomal subunit protein uS3 from Rhizobium leguminosarum bv. trifolii (strain WSM2304).